Reading from the N-terminus, the 283-residue chain is Ribosomal RNA small subunit methyltransferase A (283 aa).

S-adenosyl-L-methionine is bound by residues asparagine 13, leucine 15, glycine 39, glutamate 59, aspartate 87, and asparagine 108.

Belongs to the class I-like SAM-binding methyltransferase superfamily. rRNA adenine N(6)-methyltransferase family. RsmA subfamily.

It localises to the cytoplasm. The catalysed reaction is adenosine(1518)/adenosine(1519) in 16S rRNA + 4 S-adenosyl-L-methionine = N(6)-dimethyladenosine(1518)/N(6)-dimethyladenosine(1519) in 16S rRNA + 4 S-adenosyl-L-homocysteine + 4 H(+). In terms of biological role, specifically dimethylates two adjacent adenosines (A1518 and A1519) in the loop of a conserved hairpin near the 3'-end of 16S rRNA in the 30S particle. May play a critical role in biogenesis of 30S subunits. The protein is Ribosomal RNA small subunit methyltransferase A of Helicobacter hepaticus (strain ATCC 51449 / 3B1).